The sequence spans 277 residues: F420-dependent methylenetetrahydromethanopterin dehydrogenase (277 aa).

The protein belongs to the MTD family.

It carries out the reaction 5,10-methylenetetrahydromethanopterin + oxidized coenzyme F420-(gamma-L-Glu)(n) + 2 H(+) = 5,10-methenyl-5,6,7,8-tetrahydromethanopterin + reduced coenzyme F420-(gamma-L-Glu)(n). The protein operates within one-carbon metabolism; methanogenesis from CO(2); 5,10-methylene-5,6,7,8-tetrahydromethanopterin from 5,10-methenyl-5,6,7,8-tetrahydromethanopterin (coenzyme F420 route): step 1/1. Functionally, catalyzes the reversible reduction of methenyl-H(4)MPT(+) to methylene-H(4)MPT. This Methanococcus maripaludis (strain C7 / ATCC BAA-1331) protein is F420-dependent methylenetetrahydromethanopterin dehydrogenase.